The primary structure comprises 685 residues: DNA-directed RNA polymerase subunit beta' (685 aa).

Positions 69, 71, 87, and 90 each coordinate Zn(2+). Mg(2+) is bound by residues Asp-492, Asp-494, and Asp-496.

It belongs to the RNA polymerase beta' chain family. RpoC1 subfamily. In plastids the minimal PEP RNA polymerase catalytic core is composed of four subunits: alpha, beta, beta', and beta''. When a (nuclear-encoded) sigma factor is associated with the core the holoenzyme is formed, which can initiate transcription. Mg(2+) is required as a cofactor. The cofactor is Zn(2+).

Its subcellular location is the plastid. It is found in the chloroplast. The enzyme catalyses RNA(n) + a ribonucleoside 5'-triphosphate = RNA(n+1) + diphosphate. In terms of biological role, DNA-dependent RNA polymerase catalyzes the transcription of DNA into RNA using the four ribonucleoside triphosphates as substrates. The chain is DNA-directed RNA polymerase subunit beta' from Dioscorea elephantipes (Elephant's foot yam).